A 206-amino-acid polypeptide reads, in one-letter code: Somatotropin (206 aa).

An N-terminal signal peptide occupies residues 1–18 (MLDRVVVLLSVLCLGVSS). Gln-19 carries the post-translational modification Pyrrolidone carboxylic acid. Position 37 (His-37) interacts with Zn(2+). A disulfide bond links Cys-70 and Cys-179. A Zn(2+)-binding site is contributed by Glu-188. Cys-196 and Cys-204 are disulfide-bonded.

The protein belongs to the somatotropin/prolactin family.

It localises to the secreted. In terms of biological role, growth hormone plays an important role in growth control and is involved in the regulation of several anabolic processes. Implicated as an osmoregulatory substance important for seawater adaptation. This chain is Somatotropin (gh), found in Pseudocaranx dentex (White trevally).